A 587-amino-acid polypeptide reads, in one-letter code: Heavy metal-associated isoprenylated plant protein 33 (587 aa).

One can recognise an HMA domain in the interval 9-72 (IQTCVLKVNI…KLLKSGKHAE (64 aa)). Cys-20 and Cys-23 together coordinate a metal cation. Disordered regions lie at residues 98-146 (QIDH…MVIP), 176-261 (LKLP…KPMM), 287-449 (AHKN…PMSN), 462-504 (PGGG…QQQQ), and 532-587 (YARP…CNIM). Composition is skewed to gly residues over residues 104–113 (KGGGGGGGGP) and 121–140 (KIGG…GGGP). The segment covering 194-208 (PMNKNPQMPNNPNQK) has biased composition (low complexity). Over residues 215–248 (PDDDDEEDFSDEFDDEFDEDDDEFDDDLEDDEFD) the composition is skewed to acidic residues. Composition is skewed to gly residues over residues 290–300 (NGGGPGPAGGK), 312–419 (MGGG…GGGP), and 428–445 (GAMG…GGPG). Low complexity predominate over residues 471–483 (SAEAPPGYFQGQV). 2 stretches are compositionally biased toward pro residues: residues 534 to 547 (RPPP…PQPQ) and 554 to 565 (YPYPYPYPPQYP). Residues 578-587 (DENTSSCNIM) are compositionally biased toward polar residues. Residue Cys-584 is modified to Cysteine methyl ester. Cys-584 carries S-farnesyl cysteine lipidation. A propeptide spans 585-587 (NIM) (removed in mature form).

Belongs to the HIPP family.

Its function is as follows. Heavy-metal-binding protein. This is Heavy metal-associated isoprenylated plant protein 33 from Arabidopsis thaliana (Mouse-ear cress).